A 427-amino-acid polypeptide reads, in one-letter code: O-methyltransferase PaMT (427 aa).

The S-adenosyl-L-methionine site is built by Trp-230 and Asp-281. The active-site Proton acceptor is the His-326.

It belongs to the class I-like SAM-binding methyltransferase superfamily. Cation-independent O-methyltransferase family. COMT subfamily. S-adenosyl-L-methionine is required as a cofactor.

It participates in mycotoxin biosynthesis. Its function is as follows. O-methyltransferase; part of the 2 gene clusters that mediate the biosynthesis of fusicoccins, diterpene glucosides that display phytohormone-like activity and function as potent activators of plasma membrane H(+)-ATPases in plants by modifying 14-3-3 proteins and cause the plant disease constriction canker. The first step in the pathway is performed by the fusicoccadiene synthase PaFS that possesses both prenyl transferase and terpene cyclase activity, converting isopentenyl diphosphate and dimethylallyl diphosphate into geranylgeranyl diphosphate (GGDP) and successively converting GGDP into fusicocca-2,10(14)-diene, a precursor for fusicoccin H. The second step is the oxidation at the C-8 position by the cytochrome P450 monooxygenase PaP450-2 to yield fusicocca-2,10(14)-diene-8-beta-ol. The cytochrome P450 monooxygenase PaP450-1 then catalyzes the hydroxylation at the C-16 position to produce fusicocca-2,10(14)-diene-8-beta,16-diol. The dioxygenase fc-dox then catalyzes the 16-oxydation of fusicocca-2,10(14)-diene-8-beta,16-diol to yield an aldehyde (8-beta-hydroxyfusicocca-1,10(14)-dien-16-al). The short-chain dehydrogenase/reductase fc-sdr catalyzes the reduction of the aldehyde to yield fusicocca-1,10(14)-diene-8-beta,16-diol. The next step is the hydroxylation at C-9 performed by the cytochrome P450 monooxygenase PaP450-3 that leads to fusicoccin H aglycon which is glycosylated to fusicoccin H by the O-glycosyltransferase PaGT. Hydroxylation at C-12 by the cytochrome P450 monooxygenase PaP450-4 leads then to the production of fusicoccin Q and is followed by methylation by the O-methyltransferase PaMT to yield fusicoccin P. Fusicoccin P is further converted to fusicoccin J via prenylation by the O-glucose prenyltransferase PaPT. Cytochrome P450 monooxygenase PaP450-5 then performs hydroxylation at C-19 to yield dideacetyl-fusicoccin A which is acetylated to 3'-O-deacetyl-fusicoccin A by the O-acetyltransferase PaAT-2. Finally, a another acetylation by the O-acetyltransferase PaAT-1 yields fusicoccin A. This is O-methyltransferase PaMT from Phomopsis amygdali (Fusicoccum amygdali).